The primary structure comprises 82 residues: Short neurotoxin OKI-10 (82 aa).

The N-terminal stretch at 1 to 20 (KTLLLTLVVVTIVCLDLGYT) is a signal peptide. Disulfide bonds link C23–C44, C37–C61, C63–C74, and C75–C80.

This sequence belongs to the three-finger toxin family. Short-chain subfamily. Type I alpha-neurotoxin sub-subfamily. As to expression, expressed by the venom gland.

The protein resides in the secreted. Its function is as follows. Binds to muscle nicotinic acetylcholine receptor (nAChR) and inhibit acetylcholine from binding to the receptor, thereby impairing neuromuscular transmission. This is Short neurotoxin OKI-10 from Laticauda laticaudata (Blue-ringed sea krait).